Reading from the N-terminus, the 124-residue chain is Large ribosomal subunit protein bL12 (124 aa).

The protein belongs to the bacterial ribosomal protein bL12 family. Homodimer. Part of the ribosomal stalk of the 50S ribosomal subunit. Forms a multimeric L10(L12)X complex, where L10 forms an elongated spine to which 2 to 4 L12 dimers bind in a sequential fashion. Binds GTP-bound translation factors.

Its function is as follows. Forms part of the ribosomal stalk which helps the ribosome interact with GTP-bound translation factors. Is thus essential for accurate translation. The polypeptide is Large ribosomal subunit protein bL12 (Jannaschia sp. (strain CCS1)).